Reading from the N-terminus, the 481-residue chain is Cysteine--tRNA ligase (481 aa).

Cys-27 lines the Zn(2+) pocket. The short motif at 29–39 (PTVYNYAHIGN) is the 'HIGH' region element. Zn(2+) contacts are provided by Cys-222, His-247, and Glu-251. The 'KMSKS' region signature appears at 279–283 (KMSKS). Lys-282 lines the ATP pocket.

Belongs to the class-I aminoacyl-tRNA synthetase family. Monomer. Zn(2+) is required as a cofactor.

Its subcellular location is the cytoplasm. It catalyses the reaction tRNA(Cys) + L-cysteine + ATP = L-cysteinyl-tRNA(Cys) + AMP + diphosphate. This chain is Cysteine--tRNA ligase, found in Borrelia turicatae (strain 91E135).